A 183-amino-acid chain; its full sequence is Shikimate kinase (183 aa).

15 to 20 (GSGKST) provides a ligand contact to ATP. Serine 19 serves as a coordination point for Mg(2+). Aspartate 37, arginine 61, and glycine 85 together coordinate substrate. Arginine 123 lines the ATP pocket. Arginine 142 is a binding site for substrate.

This sequence belongs to the shikimate kinase family. In terms of assembly, monomer. The cofactor is Mg(2+).

The protein resides in the cytoplasm. It carries out the reaction shikimate + ATP = 3-phosphoshikimate + ADP + H(+). The protein operates within metabolic intermediate biosynthesis; chorismate biosynthesis; chorismate from D-erythrose 4-phosphate and phosphoenolpyruvate: step 5/7. Catalyzes the specific phosphorylation of the 3-hydroxyl group of shikimic acid using ATP as a cosubstrate. This Paracidovorax citrulli (strain AAC00-1) (Acidovorax citrulli) protein is Shikimate kinase.